The following is a 330-amino-acid chain: Apolipoprotein E (330 aa).

The signal sequence occupies residues 1–18 (MKVLWAALVVALLAGCWA). A disordered region spans residues 21 to 43 (EPESPLQGKPEPELEPELEPKRE). Tandem repeats lie at residues 96–117 (TLMEETMKEIKAYRAELEEQLG), 118–139 (PMASETQARVAKELQAAQARLR), 140–161 (SDMEDVRTRLTQYRGEVQAMLG), 162–183 (QSTEELRARFASHMRKLRKRVL), 184–205 (RDAEDLQKRLAVYRAGVREGAE), 206–227 (RSVSSIRERLWPLLEQARTRHA), and 247–268 (GRLEEVGSRARSHLDEVREQME). The 7 X 22 AA approximate tandem repeats stretch occupies residues 96 to 268 (TLMEETMKEI…HLDEVREQME (173 aa)). A Methionine sulfoxide modification is found at M159. Position 163 is a phosphoserine (S163). The LDL and other lipoprotein receptors binding stretch occupies residues 174–184 (HMRKLRKRVLR). Residue 178–181 (LRKR) participates in heparin binding. A lipid-binding and lipoprotein association region spans residues 226 to 303 (HANLATQPLR…SWFEPLVEDM (78 aa)). 242–249 (GQQLRGRL) lines the heparin pocket. The tract at residues 279-330 (NQMRQQVEAFQARLKSWFEPLVEDMQRQWAGLVEKVQVAVGTSPTTPPLETK) is homooligomerization. The interval 291-303 (RLKSWFEPLVEDM) is specificity for association with VLDL.

The protein belongs to the apolipoprotein A1/A4/E family. Homotetramer. May interact with ABCA1; functionally associated with ABCA1 in the biogenesis of HDLs. May interact with APP/A4 amyloid-beta peptide; the interaction is extremely stable in vitro but its physiological significance is unclear. May interact with MAPT. May interact with MAP2. In the cerebrospinal fluid, interacts with secreted SORL1. Interacts with PMEL; this allows the loading of PMEL luminal fragment on ILVs to induce fibril nucleation. In terms of processing, APOE exists as multiple glycosylated and sialylated glycoforms within cells and in plasma. The extent of glycosylation and sialylation are tissue and context specific. Post-translationally, glycated in plasma VLDL. Phosphorylated by FAM20C in the extracellular medium.

It localises to the secreted. It is found in the extracellular space. The protein resides in the extracellular matrix. Its subcellular location is the extracellular vesicle. The protein localises to the endosome. It localises to the multivesicular body. APOE is an apolipoprotein, a protein associating with lipid particles, that mainly functions in lipoprotein-mediated lipid transport between organs via the plasma and interstitial fluids. APOE is a core component of plasma lipoproteins and is involved in their production, conversion and clearance. Apolipoproteins are amphipathic molecules that interact both with lipids of the lipoprotein particle core and the aqueous environment of the plasma. As such, APOE associates with chylomicrons, chylomicron remnants, very low density lipoproteins (VLDL) and intermediate density lipoproteins (IDL) but shows a preferential binding to high-density lipoproteins (HDL). It also binds a wide range of cellular receptors including the LDL receptor/LDLR, the LDL receptor-related proteins LRP1, LRP2 and LRP8 and the very low-density lipoprotein receptor/VLDLR that mediate the cellular uptake of the APOE-containing lipoprotein particles. Finally, APOE also has a heparin-binding activity and binds heparan-sulfate proteoglycans on the surface of cells, a property that supports the capture and the receptor-mediated uptake of APOE-containing lipoproteins by cells. A main function of APOE is to mediate lipoprotein clearance through the uptake of chylomicrons, VLDLs, and HDLs by hepatocytes. APOE is also involved in the biosynthesis by the liver of VLDLs as well as their uptake by peripheral tissues ensuring the delivery of triglycerides and energy storage in muscle, heart and adipose tissues. By participating in the lipoprotein-mediated distribution of lipids among tissues, APOE plays a critical role in plasma and tissues lipid homeostasis. APOE is also involved in two steps of reverse cholesterol transport, the HDLs-mediated transport of cholesterol from peripheral tissues to the liver, and thereby plays an important role in cholesterol homeostasis. First, it is functionally associated with ABCA1 in the biogenesis of HDLs in tissues. Second, it is enriched in circulating HDLs and mediates their uptake by hepatocytes. APOE also plays an important role in lipid transport in the central nervous system, regulating neuron survival and sprouting. The protein is Apolipoprotein E (APOE) of Neomonachus schauinslandi (Hawaiian monk seal).